Reading from the N-terminus, the 379-residue chain is Cobalt-precorrin-5B C(1)-methyltransferase (379 aa).

The protein belongs to the CbiD family.

It carries out the reaction Co-precorrin-5B + S-adenosyl-L-methionine = Co-precorrin-6A + S-adenosyl-L-homocysteine. It participates in cofactor biosynthesis; adenosylcobalamin biosynthesis; cob(II)yrinate a,c-diamide from sirohydrochlorin (anaerobic route): step 6/10. In terms of biological role, catalyzes the methylation of C-1 in cobalt-precorrin-5B to form cobalt-precorrin-6A. In Edwardsiella ictaluri (strain 93-146), this protein is Cobalt-precorrin-5B C(1)-methyltransferase.